The following is a 589-amino-acid chain: Oligo-1,6-glucosidase IMA2 (589 aa).

Aspartate 215 serves as the catalytic Nucleophile. Glutamate 277 acts as the Proton donor in catalysis.

Belongs to the glycosyl hydrolase 13 family.

It carries out the reaction Hydrolysis of (1-&gt;6)-alpha-D-glucosidic linkages in some oligosaccharides produced from starch and glycogen by alpha-amylase, and in isomaltose.. Alpha-glucosidase with specificity for isomaltase, methyl-alpha-glucoside, and palatinose. The protein is Oligo-1,6-glucosidase IMA2 (IMA2) of Saccharomyces cerevisiae (strain ATCC 204508 / S288c) (Baker's yeast).